The primary structure comprises 171 residues: S-ribosylhomocysteine lyase (171 aa).

Fe cation is bound by residues H54, H58, and C128.

This sequence belongs to the LuxS family. In terms of assembly, homodimer. Fe cation is required as a cofactor.

The enzyme catalyses S-(5-deoxy-D-ribos-5-yl)-L-homocysteine = (S)-4,5-dihydroxypentane-2,3-dione + L-homocysteine. Involved in the synthesis of autoinducer 2 (AI-2) which is secreted by bacteria and is used to communicate both the cell density and the metabolic potential of the environment. The regulation of gene expression in response to changes in cell density is called quorum sensing. Catalyzes the transformation of S-ribosylhomocysteine (RHC) to homocysteine (HC) and 4,5-dihydroxy-2,3-pentadione (DPD). The chain is S-ribosylhomocysteine lyase from Escherichia fergusonii (strain ATCC 35469 / DSM 13698 / CCUG 18766 / IAM 14443 / JCM 21226 / LMG 7866 / NBRC 102419 / NCTC 12128 / CDC 0568-73).